We begin with the raw amino-acid sequence, 460 residues long: Putative glycoside/cation symporter YagG (460 aa).

Residues 1-9 (MTQLTMKDK) are Cytoplasmic-facing. Transmembrane regions (helical) follow at residues 10–30 (IGYGLGDTACGFVWQATMFLL) and 31–51 (AYFYTDVFGLSAGIMGTLFLV). Topologically, residues 52–78 (SRVLDAVTDPLMGLLVDRTRTRHGQFR) are cytoplasmic. Residues 79–99 (PFLLWGAIPFGIVCVLTFYTP) traverse the membrane as a helical segment. Topologically, residues 100–106 (DFSAQGK) are periplasmic. A helical membrane pass occupies residues 107 to 127 (IIYACVTYILLTLVYTFVNVP). Topologically, residues 128–150 (YCAMPGVITADPKERHALQSWRF) are cytoplasmic. The chain crosses the membrane as a helical span at residues 151-171 (FLAAAGSLAISGIALPLVSII). The Periplasmic portion of the chain corresponds to 172 to 179 (GKGDEQVG). Residues 180–200 (YFGAMCVLGLSGVVLLYVCFF) form a helical membrane-spanning segment. Residues 201–262 (TTKERYTFEV…FVKYVMDHPE (62 aa)) are Cytoplasmic-facing. A helical transmembrane segment spans residues 263–283 (LATQFLLYGSLATMFGSLCSS). The Periplasmic segment spans residues 284–308 (RLLGRFDRVTAFKWIIVAYSLISLL). The helical transmembrane segment at 309–329 (IFVTPAEHIALIFALNILFLF) threads the bilayer. The Cytoplasmic segment spans residues 330–366 (VFNTTTPLQWLMASDVVDYEESRSGRRLDGLVFSTYL). A helical transmembrane segment spans residues 367-387 (FSLKIGLAIGGAVVGWILAYV). Residues 388–405 (NYSASSSVQPVEVLTTIK) are Periplasmic-facing. The helical transmembrane segment at 406 to 426 (ILFCVVPVVLYAGMFIMLSLY) threads the bilayer. The Cytoplasmic segment spans residues 427–460 (KLTDARVEAISRQLIKHRAAQGEAVPDAATAASH).

The protein belongs to the sodium:galactoside symporter (TC 2.A.2) family.

The protein resides in the cell inner membrane. This Escherichia coli (strain K12) protein is Putative glycoside/cation symporter YagG (yagG).